The following is a 203-amino-acid chain: Small ribosomal subunit protein uS4c (203 aa).

The segment at 15 to 43 (LGSLPGLTSKRPRSGSDLRNQSRSGKRSQ) is disordered. Residues 89–169 (MRLDNILFRL…LPKHLTLHSL (81 aa)) form the S4 RNA-binding domain.

Belongs to the universal ribosomal protein uS4 family. Part of the 30S ribosomal subunit. Contacts protein S5. The interaction surface between S4 and S5 is involved in control of translational fidelity.

The protein resides in the plastid. It localises to the chloroplast. Functionally, one of the primary rRNA binding proteins, it binds directly to 16S rRNA where it nucleates assembly of the body of the 30S subunit. Its function is as follows. With S5 and S12 plays an important role in translational accuracy. The protein is Small ribosomal subunit protein uS4c (rps4) of Illicium oligandrum (Star anise).